Reading from the N-terminus, the 366-residue chain is Tudor domain-containing protein 10 (366 aa).

The 74-residue stretch at 34-107 (TEVYVGNLPL…RKLFVNTSKR (74 aa)) folds into the RRM domain. The Tudor domain maps to 210 to 317 (FWAMHVTEAL…PLTQPFMLEK (108 aa)). The stretch at 216 to 237 (TEALHQNMQALFSTLAQAEEQQ) forms a coiled coil.

This chain is Tudor domain-containing protein 10 (TDRD10), found in Homo sapiens (Human).